Reading from the N-terminus, the 650-residue chain is PTS system mannose-specific EIIBCA component (650 aa).

Residues 1-98 (MKLLAITSCP…PEELIQKALN (98 aa)) enclose the PTS EIIB type-2 domain. Cysteine 9 acts as the Phosphocysteine intermediate; for EIIB activity in catalysis. One can recognise a PTS EIIC type-2 domain in the interval 123–456 (IYRHLMNGVS…SLVTALFVNV (334 aa)). 7 helical membrane-spanning segments follow: residues 133–153 (FMVPFIVVGGLLIAVALTLGG), 174–194 (IGSASFSFMIPILAGYIAYSI), 199–219 (GLVPGMIGGYIAATGSFYDSA), 221–241 (GAGFLGGIIAGFLAGYAALWI), 256–276 (IIIIPVFASLIVGLAFVFLIG), 297–317 (SSILLALILGAMISFDMGGPV), and 336–356 (IMGPIAVAICIPPIGLGIATF). At serine 365 the chain carries Phosphoserine. A run of 3 helical transmembrane segments spans residues 369–389 (MGKAAFTMGLFGITEGAIPFA), 396–416 (VIPSIMAGSMTGSVIAMIGNV), and 436–456 (VLMFFIAVIAGSLVTALFVNV). The PTS EIIA type-2 domain occupies 504 to 649 (DIISPELIEP…EEAYKLLEEI (146 aa)). Histidine 566 acts as the Tele-phosphohistidine intermediate; for EIIA activity in catalysis.

It localises to the cell membrane. The catalysed reaction is D-mannose(out) + N(pros)-phospho-L-histidyl-[protein] = D-mannose 6-phosphate(in) + L-histidyl-[protein]. The phosphoenolpyruvate-dependent sugar phosphotransferase system (sugar PTS), a major carbohydrate active -transport system, catalyzes the phosphorylation of incoming sugar substrates concomitantly with their translocation across the cell membrane. This system is involved in mannose transport. This chain is PTS system mannose-specific EIIBCA component (manP), found in Bacillus subtilis (strain 168).